We begin with the raw amino-acid sequence, 162 residues long: 2-C-methyl-D-erythritol 2,4-cyclodiphosphate synthase (162 aa).

The a divalent metal cation site is built by aspartate 12 and histidine 14. Residues 12 to 14 (DVH) and 38 to 39 (HS) each bind 4-CDP-2-C-methyl-D-erythritol 2-phosphate. An a divalent metal cation-binding site is contributed by histidine 46. 4-CDP-2-C-methyl-D-erythritol 2-phosphate contacts are provided by residues 60–62 (DIG), 65–69 (FPDTD), phenylalanine 143, and arginine 146.

Belongs to the IspF family. Homotrimer. Requires a divalent metal cation as cofactor.

It carries out the reaction 4-CDP-2-C-methyl-D-erythritol 2-phosphate = 2-C-methyl-D-erythritol 2,4-cyclic diphosphate + CMP. Its pathway is isoprenoid biosynthesis; isopentenyl diphosphate biosynthesis via DXP pathway; isopentenyl diphosphate from 1-deoxy-D-xylulose 5-phosphate: step 4/6. Its function is as follows. Involved in the biosynthesis of isopentenyl diphosphate (IPP) and dimethylallyl diphosphate (DMAPP), two major building blocks of isoprenoid compounds. Catalyzes the conversion of 4-diphosphocytidyl-2-C-methyl-D-erythritol 2-phosphate (CDP-ME2P) to 2-C-methyl-D-erythritol 2,4-cyclodiphosphate (ME-CPP) with a corresponding release of cytidine 5-monophosphate (CMP). The chain is 2-C-methyl-D-erythritol 2,4-cyclodiphosphate synthase from Azoarcus sp. (strain BH72).